Reading from the N-terminus, the 238-residue chain is Small ribosomal subunit protein uS2 (238 aa).

It belongs to the universal ribosomal protein uS2 family.

In Prochlorococcus marinus (strain SARG / CCMP1375 / SS120), this protein is Small ribosomal subunit protein uS2.